Consider the following 536-residue polypeptide: Phosphoenolpyruvate carboxykinase (ATP) (536 aa).

Substrate is bound by residues Arg61, Tyr195, and Lys201. Residues Lys201, His220, and 236-244 (GLSGTGKTT) each bind ATP. Residues Lys201 and His220 each contribute to the Mn(2+) site. Position 257 (Asp257) interacts with Mn(2+). 3 residues coordinate ATP: Glu285, Arg323, and Thr448. A substrate-binding site is contributed by Arg323.

The protein belongs to the phosphoenolpyruvate carboxykinase (ATP) family. Mn(2+) serves as cofactor.

Its subcellular location is the cytoplasm. It carries out the reaction oxaloacetate + ATP = phosphoenolpyruvate + ADP + CO2. It functions in the pathway carbohydrate biosynthesis; gluconeogenesis. Its function is as follows. Involved in the gluconeogenesis. Catalyzes the conversion of oxaloacetate (OAA) to phosphoenolpyruvate (PEP) through direct phosphoryl transfer between the nucleoside triphosphate and OAA. The protein is Phosphoenolpyruvate carboxykinase (ATP) of Methylobacterium sp. (strain 4-46).